A 425-amino-acid polypeptide reads, in one-letter code: tRNA(Ile)-lysidine synthase (425 aa).

27–32 is an ATP binding site; the sequence is SGGLDS.

This sequence belongs to the tRNA(Ile)-lysidine synthase family.

It localises to the cytoplasm. The enzyme catalyses cytidine(34) in tRNA(Ile2) + L-lysine + ATP = lysidine(34) in tRNA(Ile2) + AMP + diphosphate + H(+). Functionally, ligates lysine onto the cytidine present at position 34 of the AUA codon-specific tRNA(Ile) that contains the anticodon CAU, in an ATP-dependent manner. Cytidine is converted to lysidine, thus changing the amino acid specificity of the tRNA from methionine to isoleucine. This is tRNA(Ile)-lysidine synthase from Streptococcus pneumoniae (strain Taiwan19F-14).